A 358-amino-acid polypeptide reads, in one-letter code: Insulin gene enhancer protein ISL-2A (358 aa).

2 consecutive LIM zinc-binding domains span residues 27 to 80 (CVGC…CKRD) and 89 to 143 (CANC…RADH). The segment at residues 190–249 (TTRVRTVLNEKQLHTLRTCYNANPRPDALMKEQLVEMTGLSPRVIRVWFQNKRCKDKKRS) is a DNA-binding region (homeobox). The segment covering 325–335 (ESGSMGNSSGS) has biased composition (low complexity). A disordered region spans residues 325 to 358 (ESGSMGNSSGSDVTSLSSQLPDTPNSMVASPVDT). A compositionally biased stretch (polar residues) spans 336–358 (DVTSLSSQLPDTPNSMVASPVDT).

The protein localises to the nucleus. Functionally, binds to one of the cis-acting domain of the insulin gene enhancer. May be involved in subtype specialization of primary motoneurons. The polypeptide is Insulin gene enhancer protein ISL-2A (isl2a) (Oncorhynchus tshawytscha (Chinook salmon)).